A 693-amino-acid polypeptide reads, in one-letter code: C6 finger domain transcription factor nscR (693 aa).

The segment at residues 17 to 43 (CELCRERKVKCDKLDPCTNCSSAGVIC) is a DNA-binding region (zn(2)-C6 fungal-type). Residues 589–608 (AANTLSVPHTPPSRSSITSS) are disordered.

It localises to the nucleus. Functionally, transcription factor that specifically regulates the neosartoricin B biosynthesis gene cluster. This chain is C6 finger domain transcription factor nscR, found in Trichophyton rubrum (strain ATCC MYA-4607 / CBS 118892) (Athlete's foot fungus).